Consider the following 459-residue polypeptide: Autophagy-related protein 18 (459 aa).

WD repeat units follow at residues 1-39 (MTSP…RIFS) and 188-228 (AHRS…KLYQ). Residues 229-232 (FRRG) form a necessary for proper localization to vacuole membrane region. The short motif at 229–233 (FRRGT) is the L/FRRG motif element. One copy of the WD 3 repeat lies at 233–272 (TYPSTIYSMSFNLSSTLLCVSSTSDTIHIFRLGAPPGNTT). The tract at residues 264 to 339 (LGAPPGNTTP…RGSGSFSSML (76 aa)) is disordered. The segment covering 265-277 (GAPPGNTTPAGAP) has biased composition (low complexity). Residues 285 to 296 (RQDRWSRARSYD) show a composition bias toward basic and acidic residues. Over residues 319 to 330 (PGAGNNQGGHTR) the composition is skewed to gly residues. Residues 393–433 (APGGPLRSVVAMSSSSPQVMVVTSDGGFYVYNIDMEHGGEG) form a WD 4 repeat.

This sequence belongs to the WD repeat PROPPIN family. Component of the PI(3,5)P2 regulatory complex. Interacts with ATG2 and ATG9. The ATG2-ATG18 complex is essential for autophagosome formation.

The protein localises to the preautophagosomal structure membrane. It is found in the vacuole membrane. It localises to the endosome membrane. In terms of biological role, component of the PI(3,5)P2 regulatory complex that regulates both the synthesis and turnover of phosphatidylinositol 3,5-bisphosphate (PtdIns(3,5)P2). Plays an important role in osmotically-induced vacuole fragmentation. Required for cytoplasm to vacuole transport (Cvt) vesicle formation, pexophagy and starvation-induced autophagy. Involved in correct ATG9 trafficking to the pre-autophagosomal structure. With ATG2, protects ATG8 from ATG4-mediated cleavage. Autophagy is required for proper vegetative growth, asexual/sexual reproduction, and full virulence. Autophagy is particularly involved in the biosynthesis of deoxynivalenol (DON), an important virulence determinant. The chain is Autophagy-related protein 18 from Gibberella zeae (strain ATCC MYA-4620 / CBS 123657 / FGSC 9075 / NRRL 31084 / PH-1) (Wheat head blight fungus).